We begin with the raw amino-acid sequence, 119 residues long: Outer membrane protein assembly factor BamE (119 aa).

Positions 1–19 (MQFTKWFIALPLAVTALSG) are cleaved as a signal peptide. C20 carries the N-palmitoyl cysteine lipid modification. C20 is lipidated: S-diacylglycerol cysteine.

The protein belongs to the BamE family. As to quaternary structure, part of the Bam complex.

It is found in the cell outer membrane. Functionally, part of the outer membrane protein assembly complex, which is involved in assembly and insertion of beta-barrel proteins into the outer membrane. The polypeptide is Outer membrane protein assembly factor BamE (Vibrio cholerae serotype O1 (strain ATCC 39541 / Classical Ogawa 395 / O395)).